The sequence spans 482 residues: Vanillin dehydrogenase (482 aa).

NAD(+) is bound at residue 228–233; that stretch reads GSTHVG. Catalysis depends on residues Glu-250 and Cys-284.

Belongs to the aldehyde dehydrogenase family.

The enzyme catalyses vanillin + NAD(+) + H2O = vanillate + NADH + 2 H(+). In terms of biological role, catalyzes the NAD-dependent oxidation of vanillin to vanillic acid. The protein is Vanillin dehydrogenase (vdh) of Pseudomonas fluorescens.